Here is a 98-residue protein sequence, read N- to C-terminus: Defensin-A (98 aa).

The first 18 residues, methionine 1–threonine 18, serve as a signal peptide directing secretion. The propeptide occupies serine 19–arginine 58. Disulfide bonds link cysteine 61–cysteine 88, cysteine 74–cysteine 94, and cysteine 78–cysteine 96.

It belongs to the invertebrate defensin family. Type 1 subfamily.

Its subcellular location is the secreted. Antibacterial peptide mostly active against Gram-positive bacteria. Has activity against the bacteria Gram-negative E.cloacae beta12. The protein is Defensin-A (DEFA) of Aedes aegypti (Yellowfever mosquito).